The chain runs to 315 residues: Protein ORANGE-LIKE, chloroplastic (315 aa).

A chloroplast-targeting transit peptide spans M1–L16. A run of 2 helical transmembrane segments spans residues L155–P175 and I207–V227. Residues I225–H307 form a CR-type zinc finger. Residues C238–G245 form a CXXCXGXG motif repeat. Residues C249–G256 form a CXXCXXXG motif repeat. The stretch at C282–G289 is one CXXCXGXG motif repeat. A CXXCXXXG motif repeat occupies C293–G300.

Belongs to the orange-like family. As to quaternary structure, interacts with PSY1.

Its subcellular location is the plastid. It is found in the chloroplast membrane. Functionally, may be associated with accumulation of carotenoids in chromoplasts. This is Protein ORANGE-LIKE, chloroplastic (ORLIKE) from Arabidopsis thaliana (Mouse-ear cress).